A 69-amino-acid chain; its full sequence is Sec-independent protein translocase protein TatA (69 aa).

A helical transmembrane segment spans residues 1–21 (MFGLGGQELILILLIILLLFG).

It belongs to the TatA/E family. As to quaternary structure, forms a complex with TatC.

It localises to the cell inner membrane. Its function is as follows. Part of the twin-arginine translocation (Tat) system that transports large folded proteins containing a characteristic twin-arginine motif in their signal peptide across membranes. TatA could form the protein-conducting channel of the Tat system. The protein is Sec-independent protein translocase protein TatA of Chlorobium phaeovibrioides (strain DSM 265 / 1930) (Prosthecochloris vibrioformis (strain DSM 265)).